Reading from the N-terminus, the 469-residue chain is Protein HEAT STRESS TOLERANT DWD 1 (469 aa).

Basic residues predominate over residues 1–15; that stretch reads MGRNVKTKAKRKNKK. Disordered stretches follow at residues 1-29 and 115-150; these read MGRNVKTKAKRKNKKKAEASSSEIPSIPT and DVVPKTFGNGEDEDEDDEDDSDSDDDDGDEASKTPN. Positions 124–143 are enriched in acidic residues; it reads GEDEDEDDEDDSDSDDDDGD. 6 WD repeats span residues 157–197, 221–261, 267–307, 311–351, 358–398, and 425–464; these read AHHG…NALA, GHKD…WAVD, GHTA…SPAL, AHNA…GGDA, YHKH…DEEE, and QGQKDLKELHWHNQIPGMIISTAGDGFNILMPYNIQNTLP.

Belongs to the WD repeat RBAP46/RBAP48/MSI1 family. In terms of assembly, probable component of CULLIN4 (CUL4) RING ligase (CRL4) complexes. Interacts with DDB1A and DDB1B. Associates with HSP90-1.

It participates in protein modification; protein ubiquitination. In terms of biological role, probable substrate receptor of CRL4 E3 ligase complexes acting as negative regulators of thermotolerance by disturbing the action of HSP90-1 and by preventing the expression of heat-inducible genes (e.g. HSP14.7, HSP21, At2g03020 and WRKY28). The chain is Protein HEAT STRESS TOLERANT DWD 1 from Arabidopsis thaliana (Mouse-ear cress).